We begin with the raw amino-acid sequence, 230 residues long: MAKKRGKKYQDALKKVDSKKEYAVKDAVQLVKDIAYANFDSTIEVAFNLNVDTKQADQQLRGAVVLPNGTGKDQTVIVFANGENAKAAQEAGADFVGDDDLVEKIQDGWLDFDVAIATPDMMPKVGRLGRVLGPKGLMPNPKTGTVTMDVAKAVSDAKAGQVTYRTDRDGNVAVPFGKVSFDTDKLVENLATLEDIVAKARPASVRGTYIKHASISSTFGPSVTLDLTTF.

This sequence belongs to the universal ribosomal protein uL1 family. In terms of assembly, part of the 50S ribosomal subunit.

In terms of biological role, binds directly to 23S rRNA. The L1 stalk is quite mobile in the ribosome, and is involved in E site tRNA release. Protein L1 is also a translational repressor protein, it controls the translation of the L11 operon by binding to its mRNA. This chain is Large ribosomal subunit protein uL1, found in Limosilactobacillus reuteri subsp. reuteri (strain JCM 1112) (Lactobacillus reuteri).